The chain runs to 327 residues: Aldo-keto reductase family 1 member A1 (327 aa).

Residues 13–22 (GQKIPLIGLG), threonine 23, tryptophan 24, and aspartate 47 contribute to the NADP(+) site. Tyrosine 52 acts as the Proton donor in catalysis. Positions 164, 165, 213, 215, 217, 265, 266, 267, 268, 271, 274, and 275 each coordinate NADP(+).

Belongs to the aldo/keto reductase family.

It localises to the cytoplasm. Its subcellular location is the cytosol. The protein localises to the apical cell membrane. The catalysed reaction is a primary alcohol + NADP(+) = an aldehyde + NADPH + H(+). It carries out the reaction S-nitroso-CoA + NADPH + H(+) = sulfinamide-CoA + NADP(+). The enzyme catalyses S-nitrosoglutathione + NADPH + H(+) = S-(hydroxysulfenamide)glutathione + NADP(+). Functionally, catalyzes the NADPH-dependent reduction of a wide variety of carbonyl-containing compounds to their corresponding alcohols. Displays enzymatic activity towards endogenous metabolites such as aromatic and aliphatic aldehydes, ketones, monosaccharides and bile acids. Acts as an aldehyde-detoxification enzyme. Also acts as an inhibitor of protein S-nitrosylation by mediating degradation of S-nitroso-coenzyme A (S-nitroso-CoA), a cofactor required to S-nitrosylate proteins. Also acts as a S-nitroso-glutathione reductase by catalyzing the NADPH-dependent reduction of S-nitrosoglutathione. Displays no reductase activity towards retinoids. In Gallus gallus (Chicken), this protein is Aldo-keto reductase family 1 member A1 (AKR1A1).